A 256-amino-acid chain; its full sequence is Thiazole synthase (256 aa).

Catalysis depends on lysine 95, which acts as the Schiff-base intermediate with DXP. Residues glycine 156, 182 to 183 (AG), and 204 to 205 (NT) contribute to the 1-deoxy-D-xylulose 5-phosphate site.

Belongs to the ThiG family. As to quaternary structure, homotetramer. Forms heterodimers with either ThiH or ThiS.

Its subcellular location is the cytoplasm. It carries out the reaction [ThiS sulfur-carrier protein]-C-terminal-Gly-aminoethanethioate + 2-iminoacetate + 1-deoxy-D-xylulose 5-phosphate = [ThiS sulfur-carrier protein]-C-terminal Gly-Gly + 2-[(2R,5Z)-2-carboxy-4-methylthiazol-5(2H)-ylidene]ethyl phosphate + 2 H2O + H(+). It functions in the pathway cofactor biosynthesis; thiamine diphosphate biosynthesis. In terms of biological role, catalyzes the rearrangement of 1-deoxy-D-xylulose 5-phosphate (DXP) to produce the thiazole phosphate moiety of thiamine. Sulfur is provided by the thiocarboxylate moiety of the carrier protein ThiS. In vitro, sulfur can be provided by H(2)S. The polypeptide is Thiazole synthase (Klebsiella pneumoniae subsp. pneumoniae (strain ATCC 700721 / MGH 78578)).